We begin with the raw amino-acid sequence, 481 residues long: MNEVSVIKEGWLHKRGEYIKTWRPRYFLLKSDGSFIGYKERPEAPDQTLPPLNNFSVAECQLMKTERPRPNTFVIRCLQWTTVIERTFHVDSPDEREEWMRAIQMVANSLKQRGPGEDAMDYKCGSPSDSSTSEMMEVAVNKARAKVTMNDFDYLKLLGKGTFGKVILVREKATGRYYAMKILRKEVIIAKDEVAHTVTESRVLQNTRHPFLTALKYAFQTHDRLCFVMEYANGGELFFHLSRERVFTEDRARFYGAEIVSALEYLHSRDVVYRDIKLENLMLDKDGHIKITDFGLCKEGISDGATMKTFCGTPEYLAPEVLEDNDYGRAVDWWGLGVVMYEMMCGRLPFYNQDHERLFELILMEEIRFPRTLGPEAKSLLAGLLKKDPKQRLGGGPSDAKEVMEHRFFLSINWQDVVQKKLLPPFKPQVTSEVDTRYFDDEFTAQSITITPPDRYDSLDPLELDQRTHFPQFSYSASIRE.

At Met1 the chain carries N-acetylmethionine. Positions 5–108 (SVIKEGWLHK…WMRAIQMVAN (104 aa)) constitute a PH domain. Phosphoserine is present on Ser34. Cys60 and Cys77 form a disulfide bridge. At Ser126 the chain carries Phosphoserine. O-linked (GlcNAc) serine glycosylation is found at Ser128 and Ser131. A Protein kinase domain is found at 152–409 (FDYLKLLGKG…AKEVMEHRFF (258 aa)). ATP is bound by residues 158-166 (LGKGTFGKV) and Lys181. Asp275 functions as the Proton acceptor in the catalytic mechanism. 2 residues coordinate Mn(2+): Asn280 and Asp293. An intrachain disulfide couples Cys297 to Cys311. Thr306 is a glycosylation site (O-linked (GlcNAc) threonine). Thr309 is subject to Phosphothreonine; by PDPK1. A glycan (O-linked (GlcNAc) threonine) is linked at Thr313. The region spanning 410–481 (LSINWQDVVQ…QFSYSASIRE (72 aa)) is the AGC-kinase C-terminal domain. Ser447 is modified (phosphoserine). Thr451 bears the Phosphothreonine mark. Phosphoserine; by MTOR is present on residues Ser474 and Ser478. An O-linked (GlcNAc) serine; alternate glycan is attached at Ser474.

Belongs to the protein kinase superfamily. AGC Ser/Thr protein kinase family. RAC subfamily. As to quaternary structure, interacts with BTBD10. Interacts with KCTD20. Interacts (via PH domain) with MTCP1, TCL1A and TCL1B; this interaction may facilitate AKT2 oligomerization and phosphorylation, hence increasing kinase activity. Interacts with PHB2; this interaction may be important for myogenic differentiation. Interacts (when phosphorylated) with CLIP3/ClipR-59; this interaction promotes cell membrane localization. Interacts with WDFY2 (via WD repeats 1-3). In terms of processing, phosphorylation on Thr-309 and Ser-474 is required for full activity. Phosphorylation of the activation loop at Thr-309 by PDPK1/PDK1 is a prerequisite for full activation. Phosphorylated and activated by PDPK1/PDK1 in the presence of phosphatidylinositol 3,4,5-trisphosphate. Phosphorylation by mTORC2 in response to growth factors plays a key role in AKT1 activation: mTORC2 phosphorylates different sites depending on the context, such as Ser-474 or Ser-478, thereby facilitating subsequent phosphorylation of the activation loop by PDPK1/PDK1. Ubiquitinated; undergoes both 'Lys-48'- and 'Lys-63'-linked polyubiquitination. TRAF6-induced 'Lys-63'-linked AKT2 ubiquitination. When fully phosphorylated and translocated into the nucleus, undergoes 'Lys-48'-polyubiquitination catalyzed by TTC3, leading to its degradation by the proteasome. Post-translationally, O-GlcNAcylation at Thr-306 and Thr-313 inhibits activating phosphorylation at Thr-309 via disrupting the interaction between AKT and PDPK1/PDK1.

It is found in the cytoplasm. It localises to the nucleus. The protein localises to the cell membrane. Its subcellular location is the early endosome. It catalyses the reaction L-seryl-[protein] + ATP = O-phospho-L-seryl-[protein] + ADP + H(+). The enzyme catalyses L-threonyl-[protein] + ATP = O-phospho-L-threonyl-[protein] + ADP + H(+). Its activity is regulated as follows. Two specific sites, one in the kinase domain (Thr-309) and the other in the C-terminal regulatory region (Ser-474), need to be phosphorylated for its full activation. AKT2 phosphorylation of PKP1 is induced by insulin. Inhibited by Akt inhibitor MK2206. Its function is as follows. AKT2 is one of 3 closely related serine/threonine-protein kinases (AKT1, AKT2 and AKT3) called the AKT kinases, and which regulate many processes including metabolism, proliferation, cell survival, growth and angiogenesis. This is mediated through serine and/or threonine phosphorylation of a range of downstream substrates. Over 100 substrate candidates have been reported so far, but for most of them, no isoform specificity has been reported. AKT is responsible of the regulation of glucose uptake by mediating insulin-induced translocation of the SLC2A4/GLUT4 glucose transporter to the cell surface. Phosphorylation of PTPN1 at 'Ser-50' negatively modulates its phosphatase activity preventing dephosphorylation of the insulin receptor and the attenuation of insulin signaling. Phosphorylation of TBC1D4 triggers the binding of this effector to inhibitory 14-3-3 proteins, which is required for insulin-stimulated glucose transport. AKT also regulates the storage of glucose in the form of glycogen by phosphorylating GSK3A at 'Ser-21' and GSK3B at 'Ser-9', resulting in inhibition of its kinase activity. Phosphorylation of GSK3 isoforms by AKT is also thought to be one mechanism by which cell proliferation is driven. AKT also regulates cell survival via the phosphorylation of MAP3K5 (apoptosis signal-related kinase). Phosphorylation of 'Ser-83' decreases MAP3K5 kinase activity stimulated by oxidative stress and thereby prevents apoptosis. AKT mediates insulin-stimulated protein synthesis by phosphorylating TSC2 at 'Ser-939' and 'Thr-1462', thereby activating mTORC1 signaling and leading to both phosphorylation of 4E-BP1 and in activation of RPS6KB1. AKT is involved in the phosphorylation of members of the FOXO factors (Forkhead family of transcription factors), leading to binding of 14-3-3 proteins and cytoplasmic localization. In particular, FOXO1 is phosphorylated at 'Thr-24', 'Ser-256' and 'Ser-319'. FOXO3 and FOXO4 are phosphorylated on equivalent sites. AKT has an important role in the regulation of NF-kappa-B-dependent gene transcription and positively regulates the activity of CREB1 (cyclic AMP (cAMP)-response element binding protein). The phosphorylation of CREB1 induces the binding of accessory proteins that are necessary for the transcription of pro-survival genes such as BCL2 and MCL1. AKT phosphorylates 'Ser-454' on ATP citrate lyase (ACLY), thereby potentially regulating ACLY activity and fatty acid synthesis. Activates the 3B isoform of cyclic nucleotide phosphodiesterase (PDE3B) via phosphorylation of 'Ser-273', resulting in reduced cyclic AMP levels and inhibition of lipolysis. Phosphorylates PIKFYVE on 'Ser-318', which results in increased PI(3)P-5 activity. The Rho GTPase-activating protein DLC1 is another substrate and its phosphorylation is implicated in the regulation cell proliferation and cell growth. AKT plays a role as key modulator of the AKT-mTOR signaling pathway controlling the tempo of the process of newborn neurons integration during adult neurogenesis, including correct neuron positioning, dendritic development and synapse formation. Signals downstream of phosphatidylinositol 3-kinase (PI(3)K) to mediate the effects of various growth factors such as platelet-derived growth factor (PDGF), epidermal growth factor (EGF), insulin and insulin-like growth factor I (IGF-I). AKT mediates the antiapoptotic effects of IGF-I. Essential for the SPATA13-mediated regulation of cell migration and adhesion assembly and disassembly. May be involved in the regulation of the placental development. In response to lysophosphatidic acid stimulation, inhibits the ciliogenesis cascade. In this context, phosphorylates WDR44, hence stabilizing its interaction with Rab11 and preventing the formation of the ciliogenic Rab11-FIP3-RAB3IP complex. Also phosphorylates RAB3IP/Rabin8, thus may affect RAB3IP guanine nucleotide exchange factor (GEF) activity toward Rab8, which is important for cilia growth. Phosphorylates PKP1, facilitating its interaction with YWHAG and translocation to the nucleus, ultimately resulting in a reduction in keratinocyte intercellular adhesion. Phosphorylation of PKP1 increases PKP1 protein stability, translocation to the cytoplasm away from desmosome plaques and PKP1-driven cap-dependent translation. In terms of biological role, several AKT2-specific substrates have been identified, including ANKRD2, C2CD5, CLK2 and PITX2. May play a role in myoblast differentiation. In this context, may act through PITX2 phosphorylation. Unphosphorylated PITX2 associates with an ELAVL1/HuR-containing complex, which stabilizes cyclin mRNA and ensuring cell proliferation. Phosphorylation by AKT2 impairs this association, leading to CCND1 mRNA destabilization and progression towards differentiation. Also involved in the negative regulation of myogenesis in response to stress conditions. In this context, acts by phosphorylating ANKRD2. May also be a key regulator of glucose uptake. Regulates insulin-stimulated glucose transport by the increase of glucose transporter GLUT4 translocation from intracellular stores to the plasma membrane. In this context, acts by phosphorylating C2CD5/CDP138 on 'Ser-197' in insulin-stimulated adipocytes. Through the phosphorylation of CLK2 on 'Thr-343', involved in insulin-regulated suppression of hepatic gluconeogenesis. This is RAC-beta serine/threonine-protein kinase (Akt2) from Mus musculus (Mouse).